The following is a 155-amino-acid chain: Small ribosomal subunit protein bS16 (155 aa).

The segment at 113 to 155 is disordered; it reads ADGAPTGEAIQQKKKKAPKKAEAAEAEAPAEEPAAESADAASE. The span at 136–146 shows a compositional bias: acidic residues; it reads AEAEAPAEEPA.

This sequence belongs to the bacterial ribosomal protein bS16 family.

This Mycobacteroides abscessus (strain ATCC 19977 / DSM 44196 / CCUG 20993 / CIP 104536 / JCM 13569 / NCTC 13031 / TMC 1543 / L948) (Mycobacterium abscessus) protein is Small ribosomal subunit protein bS16.